Reading from the N-terminus, the 345-residue chain is GTP 3',8-cyclase (345 aa).

Residues 10 to 236 enclose the Radical SAM core domain; the sequence is SHGRPLGVLR…QCVSSHWPLD (227 aa). Position 19 (arginine 19) interacts with GTP. Positions 26 and 30 each coordinate [4Fe-4S] cluster. Tyrosine 32 contributes to the S-adenosyl-L-methionine binding site. A [4Fe-4S] cluster-binding site is contributed by cysteine 33. A GTP-binding site is contributed by arginine 65. Glycine 69 is a binding site for S-adenosyl-L-methionine. Threonine 98 lines the GTP pocket. Serine 123 lines the S-adenosyl-L-methionine pocket. A GTP-binding site is contributed by lysine 172. Methionine 206 contacts S-adenosyl-L-methionine. [4Fe-4S] cluster is bound by residues cysteine 269 and cysteine 272. Residue 274 to 276 coordinates GTP; that stretch reads RIR. Position 286 (cysteine 286) interacts with [4Fe-4S] cluster.

It belongs to the radical SAM superfamily. MoaA family. As to quaternary structure, monomer and homodimer. [4Fe-4S] cluster is required as a cofactor.

The catalysed reaction is GTP + AH2 + S-adenosyl-L-methionine = (8S)-3',8-cyclo-7,8-dihydroguanosine 5'-triphosphate + 5'-deoxyadenosine + L-methionine + A + H(+). The protein operates within cofactor biosynthesis; molybdopterin biosynthesis. In terms of biological role, catalyzes the cyclization of GTP to (8S)-3',8-cyclo-7,8-dihydroguanosine 5'-triphosphate. The polypeptide is GTP 3',8-cyclase (Synechococcus sp. (strain CC9902)).